Here is a 358-residue protein sequence, read N- to C-terminus: uncharacterized protein (358 aa).

The first 15 residues, 1–15 (MITGKTISLPLSVIA), serve as a signal peptide directing secretion. The N-palmitoyl cysteine moiety is linked to residue C16. Residue C16 is the site of S-diacylglycerol cysteine attachment. A disordered region spans residues 331-358 (PCGTGSPGNPPPNINSVAQHRISTNTNR). The span at 347–358 (VAQHRISTNTNR) shows a compositional bias: polar residues.

It is found in the cell membrane. This is an uncharacterized protein from Sinorhizobium fredii (strain NBRC 101917 / NGR234).